A 198-amino-acid polypeptide reads, in one-letter code: ATP-dependent Clp protease proteolytic subunit (198 aa).

Residue Ser-98 is the Nucleophile of the active site. The active site involves His-123.

The protein belongs to the peptidase S14 family. As to quaternary structure, fourteen ClpP subunits assemble into 2 heptameric rings which stack back to back to give a disk-like structure with a central cavity, resembling the structure of eukaryotic proteasomes.

The protein localises to the cytoplasm. The enzyme catalyses Hydrolysis of proteins to small peptides in the presence of ATP and magnesium. alpha-casein is the usual test substrate. In the absence of ATP, only oligopeptides shorter than five residues are hydrolyzed (such as succinyl-Leu-Tyr-|-NHMec, and Leu-Tyr-Leu-|-Tyr-Trp, in which cleavage of the -Tyr-|-Leu- and -Tyr-|-Trp bonds also occurs).. Cleaves peptides in various proteins in a process that requires ATP hydrolysis. Has a chymotrypsin-like activity. Plays a major role in the degradation of misfolded proteins. The sequence is that of ATP-dependent Clp protease proteolytic subunit from Ehrlichia ruminantium (strain Gardel).